A 1013-amino-acid polypeptide reads, in one-letter code: Putative DNA polymerase 060R (1013 aa).

Belongs to the DNA polymerase type-B family.

It carries out the reaction DNA(n) + a 2'-deoxyribonucleoside 5'-triphosphate = DNA(n+1) + diphosphate. Its function is as follows. DNA-directed DNA polymerase involved in viral DNA replication. This Dryophytes versicolor (chameleon treefrog) protein is Putative DNA polymerase 060R.